We begin with the raw amino-acid sequence, 587 residues long: Lamin-B1 (587 aa).

Positions methionine 1–alanine 11 are enriched in polar residues. The segment at methionine 1–arginine 29 is disordered. Alanine 2 bears the N-acetylalanine mark. The interval alanine 2–glutamate 34 is head. A phosphothreonine mark is found at threonine 3 and threonine 5. Residue arginine 14 is modified to Omega-N-methylarginine. Serine 16 bears the Phosphoserine mark. Residue threonine 20 is modified to Phosphothreonine. Serine 23 is modified (phosphoserine). Threonine 25 bears the Phosphothreonine mark. Serine 28 is subject to Phosphoserine. The IF rod domain occupies glutamate 32–leucine 388. The interval glutamate 35–glutamate 69 is coil 1A. A linker 1 region spans residues valine 70–leucine 81. The coil 1B stretch occupies residues tyrosine 82–glutamate 215. Lysine 102 participates in a covalent cross-link: Glycyl lysine isopeptide (Lys-Gly) (interchain with G-Cter in SUMO2). Lysine 111 is modified (N6-acetyllysine). Residue lysine 123 forms a Glycyl lysine isopeptide (Lys-Gly) (interchain with G-Cter in SUMO2) linkage. Position 126 is a phosphoserine (serine 126). Lysine 145 participates in a covalent cross-link: Glycyl lysine isopeptide (Lys-Gly) (interchain with G-Cter in SUMO2). Lysine 157 carries the post-translational modification N6-acetyllysine; alternate. Lysine 157 is covalently cross-linked (Glycyl lysine isopeptide (Lys-Gly) (interchain with G-Cter in SUMO2); alternate). Residue serine 158 is modified to Phosphoserine. Lysine 181 is covalently cross-linked (Glycyl lysine isopeptide (Lys-Gly) (interchain with G-Cter in SUMO2)). Phosphoserine occurs at positions 200 and 232. A linker 2 region spans residues isoleucine 216–alanine 243. Glycyl lysine isopeptide (Lys-Gly) (interchain with G-Cter in SUMO2) cross-links involve residues lysine 241 and lysine 261. The tract at residues glutamine 244–glutamate 386 is coil 2. An N6-acetyllysine; alternate modification is found at lysine 271. Lysine 271 is covalently cross-linked (Glycyl lysine isopeptide (Lys-Gly) (interchain with G-Cter in SUMO2); alternate). A phosphoserine mark is found at serine 278 and serine 302. Residue lysine 312 forms a Glycyl lysine isopeptide (Lys-Gly) (interchain with G-Cter in SUMO2) linkage. Lysine 330 is subject to N6-acetyllysine; alternate. A Glycyl lysine isopeptide (Lys-Gly) (interchain with G-Cter in SUMO2); alternate cross-link involves residue lysine 330. A phosphoserine mark is found at serine 375 and serine 393. A tail region spans residues arginine 387–methionine 587. Residues leucine 390 to valine 409 show a composition bias toward low complexity. The interval leucine 390–isoleucine 432 is disordered. O-linked (GlcNAc) threonine glycosylation occurs at threonine 399. Position 413 is an omega-N-methylarginine (arginine 413). The Nuclear localization signal motif lies at lysine 415–aspartate 420. In terms of domain architecture, LTD spans valine 430–phenylalanine 546. An N6-acetyllysine modification is found at lysine 483. Lysine 532 is covalently cross-linked (Glycyl lysine isopeptide (Lys-Gly) (interchain with G-Cter in SUMO2)). Residue serine 534 is modified to Phosphoserine. Lysine 547 participates in a covalent cross-link: Glycyl lysine isopeptide (Lys-Gly) (interchain with G-Cter in SUMO2). Positions isoleucine 550–methionine 587 are disordered. Positions proline 551–proline 561 are enriched in acidic residues. The span at glutamine 573 to methionine 587 shows a compositional bias: polar residues. Threonine 576 carries the phosphothreonine modification. Residue cysteine 584 is modified to Cysteine methyl ester. Cysteine 584 carries S-farnesyl cysteine lipidation. A propeptide spans alanine 585–methionine 587 (removed in mature form).

The protein belongs to the intermediate filament family. Homodimer. Lamin dimers then assemble into dimeric head-to-tail polymers. Ultimately, two head-to-tail polymers assemble laterally into a protofilament with a uniformly shaped rod of 3.5 nm in diameter. Interacts with SPAG4 and SEPT12. Post-translationally, B-type lamins undergo a series of modifications, such as farnesylation and phosphorylation. Increased phosphorylation of the lamins occurs before envelope disintegration and probably plays a role in regulating lamin associations. In terms of processing, phosphorylation plays a key role in lamin organization, subcellular localization and nuclear envelope disintegration. Phosphorylation by CDK1 at Ser-23 and Ser-393 at the onset of mitosis drives lamin disassembly and nuclear envelope breakdown.

It localises to the nucleus lamina. Lamins are intermediate filament proteins that assemble into a filamentous meshwork, and which constitute the major components of the nuclear lamina, a fibrous layer on the nucleoplasmic side of the inner nuclear membrane. Lamins provide a framework for the nuclear envelope, bridging the nuclear envelope and chromatin, thereby playing an important role in nuclear assembly, chromatin organization, nuclear membrane and telomere dynamics. The structural integrity of the lamina is strictly controlled by the cell cycle, as seen by the disintegration and formation of the nuclear envelope in prophase and telophase, respectively. The sequence is that of Lamin-B1 (Lmnb1) from Rattus norvegicus (Rat).